Consider the following 101-residue polypeptide: Small ribosomal subunit protein uS14 (101 aa).

This sequence belongs to the universal ribosomal protein uS14 family. In terms of assembly, part of the 30S ribosomal subunit. Contacts proteins S3 and S10.

Binds 16S rRNA, required for the assembly of 30S particles and may also be responsible for determining the conformation of the 16S rRNA at the A site. The sequence is that of Small ribosomal subunit protein uS14 from Burkholderia mallei (strain NCTC 10247).